Here is a 106-residue protein sequence, read N- to C-terminus: Toxin-like structure LSTX-D3 (106 aa).

The first 20 residues, Met-1 to Ser-20, serve as a signal peptide directing secretion. Residues Glu-21–Arg-41 constitute a propeptide that is removed on maturation. 4 cysteine pairs are disulfide-bonded: Cys-45–Cys-60, Cys-52–Cys-69, Cys-59–Cys-85, and Cys-71–Cys-83.

It belongs to the neurotoxin 19 (CSTX) family. 02 (D7) subfamily. Expressed by the venom gland.

It is found in the secreted. In Lycosa singoriensis (Wolf spider), this protein is Toxin-like structure LSTX-D3.